A 544-amino-acid chain; its full sequence is Putative ligase Rv1013 (544 aa).

Lysine 528 is covalently cross-linked (Isoglutamyl lysine isopeptide (Lys-Gln) (interchain with Q-Cter in protein Pup)).

This sequence belongs to the ATP-dependent AMP-binding enzyme family. In terms of processing, pupylated at Lys-528 by the prokaryotic ubiquitin-like protein Pup, which probably leads to its degradation by the proteasome.

This Mycobacterium tuberculosis (strain ATCC 25618 / H37Rv) protein is Putative ligase Rv1013 (pks16).